We begin with the raw amino-acid sequence, 722 residues long: Zinc finger BED domain-containing protein RICESLEEPER 1 (722 aa).

Residues 66 to 126 (RKKSLVWEHF…GSCPKIKNQE (61 aa)) form a BED-type zinc finger. Zn(2+)-binding residues include cysteine 89, cysteine 92, histidine 113, and cysteine 119. The segment at 572–592 (VEQGGGNNAPASENSTQATAP) is disordered. Over residues 580-592 (APASENSTQATAP) the composition is skewed to polar residues. Residues 617 to 702 (ELEQYLDESL…EALVCAKDWL (86 aa)) form an HATC (Hobo-Ac-Tam3) domain region.

In terms of assembly, homodimer.

The protein localises to the nucleus. Functionally, transposase-like protein that is essential for plant growth and development. May regulate global gene expression by recruiting other cellular factors. The protein is Zinc finger BED domain-containing protein RICESLEEPER 1 of Oryza sativa subsp. japonica (Rice).